A 172-amino-acid polypeptide reads, in one-letter code: Small ribosomal subunit protein uS5 (172 aa).

An S5 DRBM domain is found at 17 to 80; the sequence is LREKMISVNR…DEARRKMVKV (64 aa).

Belongs to the universal ribosomal protein uS5 family. In terms of assembly, part of the 30S ribosomal subunit. Contacts proteins S4 and S8.

With S4 and S12 plays an important role in translational accuracy. Functionally, located at the back of the 30S subunit body where it stabilizes the conformation of the head with respect to the body. The chain is Small ribosomal subunit protein uS5 from Cupriavidus pinatubonensis (strain JMP 134 / LMG 1197) (Cupriavidus necator (strain JMP 134)).